The primary structure comprises 469 residues: Bile acid receptor (469 aa).

Lysine 119 participates in a covalent cross-link: Glycyl lysine isopeptide (Lys-Gly) (interchain with G-Cter in SUMO1). The segment at residues aspartate 121–threonine 196 is a DNA-binding region (nuclear receptor). The NR C4-type zinc finger occupies cysteine 124 to cysteine 144. Residues serine 132 and serine 151 each carry the phosphoserine; by PKC/PRKCA modification. N6-acetyllysine; by EP300 is present on lysine 154. An NR C4-type zinc finger spans residues cysteine 160–cysteine 184. Lysine 203 is modified (N6-methyllysine; by SETD7). Residue lysine 210 is modified to N6-acetyllysine; by EP300. The NR LBD domain occupies aspartate 245 to glutamine 469. Lysine 272 is covalently cross-linked (Glycyl lysine isopeptide (Lys-Gly) (interchain with G-Cter in SUMO1)). Position 328 (arginine 328) interacts with 3beta,7beta-dihydroxy-5beta-cholan-24-oate. Residues arginine 328, tyrosine 358, and tyrosine 366 each coordinate chenodeoxycholate. Residue tyrosine 366 coordinates 3beta,7beta-dihydroxy-5beta-cholan-24-oate. Residue threonine 439 is modified to Phosphothreonine; by PKC/PRKCZ. Chenodeoxycholate is bound at residue histidine 444.

The protein belongs to the nuclear hormone receptor family. NR1 subfamily. In terms of assembly, heterodimer with RXRA; the heterodimerization enhances the binding affinity for LXXLL motifs from coactivators. Binds DNA predominantly as a heterodimer with RXRA. After activation by agonist binding interacts with coactivators. Interacts with NCOA1, NCOA2, PPARGC1A, CARM1, SETD7, PRMT1, GPS2, SMARCA4 and MED1, EP300 and SMARCD1. Interacts with XRCC5 and XRCC6; decreasing NR1H4/FXR transactivation activity towards ABCB11/BSEP. Interacts with PAGR1 AND NCOA6; indicative for an association with an MLL2/MLL3 complex (ASCOM). In terms of processing, acetylated by EP300. Lys-210 as is the major acetylation site for EP300; the dynamicly regulated acetylation inhibits heterodimerization with RXRA and transactivation activity. Deacetylated by SIRT1. Methylation may increase transactivation of target genes. Post-translationally, phosphorylation by PKC/PRKCA increases transactivation activity by promoting association with PPARGC1A. In terms of processing, sumoylated upon ligand binding.

Its subcellular location is the nucleus. Ligand-activated transcription factor. Receptor for bile acids (BAs) such as chenodeoxycholic acid (CDCA), lithocholic acid, deoxycholic acid (DCA) and allocholic acid (ACA). Plays a essential role in BA homeostasis through the regulation of genes involved in BA synthesis, conjugation and enterohepatic circulation. Also regulates lipid and glucose homeostasis and is involved innate immune response. The FXR-RXR heterodimer binds predominantly to farnesoid X receptor response elements (FXREs) containing two inverted repeats of the consensus sequence 5'-AGGTCA-3' in which the monomers are spaced by 1 nucleotide (IR-1) but also to tandem repeat DR1 sites with lower affinity, and can be activated by either FXR or RXR-specific ligands. It is proposed that monomeric nuclear receptors such as NR5A2/LRH-1 bound to coregulatory nuclear responsive element (NRE) halfsites located in close proximity to FXREs modulate transcriptional activity. In the liver activates transcription of the corepressor NR0B2 thereby indirectly inhibiting CYP7A1 and CYP8B1 (involved in BA synthesis) implicating at least in part histone demethylase KDM1A resulting in epigenomic repression, and SLC10A1/NTCP (involved in hepatic uptake of conjugated BAs). Activates transcription of the repressor MAFG (involved in regulation of BA synthesis). Activates transcription of SLC27A5/BACS and BAAT (involved in BA conjugation), ABCB11/BSEP (involved in bile salt export) by directly recruiting histone methyltransferase CARM1, and ABCC2/MRP2 (involved in secretion of conjugated BAs) and ABCB4 (involved in secretion of phosphatidylcholine in the small intestine). Activates transcription of SLC27A5/BACS and BAAT (involved in BA conjugation), ABCB11/BSEP (involved in bile salt export) by directly recruiting histone methyltransferase CARM1, and ABCC2/MRP2 (involved in secretion of conjugated BAs) and ABCB4 (involved in secretion of phosphatidylcholine in the small intestine). In the intestine activates FGF19 expression and secretion leading to hepatic CYP7A1 repression. The function also involves the coordinated induction of hepatic KLB/beta-klotho expression. Regulates transcription of liver UGT2B4 and SULT2A1 involved in BA detoxification; binding to the UGT2B4 promoter seems to imply a monomeric transactivation independent of RXRA. Modulates lipid homeostasis by activating liver NR0B2/SHP-mediated repression of SREBF1 (involved in de novo lipogenesis), expression of PLTP (involved in HDL formation), SCARB1 (involved in HDL hepatic uptake), APOE, APOC1, APOC4, PPARA (involved in beta-oxidation of fatty acids), VLDLR and SDC1 (involved in the hepatic uptake of LDL and IDL remnants), and inhibiting expression of MTTP (involved in VLDL assembly). Increases expression of APOC2 (promoting lipoprotein lipase activity implicated in triglyceride clearance). Transrepresses APOA1 involving a monomeric competition with NR2A1 for binding to a DR1 element. Also reduces triglyceride clearance by inhibiting expression of ANGPTL3 and APOC3 (both involved in inhibition of lipoprotein lipase). Involved in glucose homeostasis by modulating hepatic gluconeogenesis through activation of NR0B2/SHP-mediated repression of respective genes. Modulates glycogen synthesis (inducing phosphorylation of glycogen synthase kinase-3). Modulates glucose-stimulated insulin secretion and is involved in insulin resistance. Involved in intestinal innate immunity. Plays a role in protecting the distal small intestine against bacterial overgrowth and preservation of the epithelial barrier. Down-regulates inflammatory cytokine expression in several types of immune cells including macrophages and mononuclear cells. Mediates trans-repression of TLR4-induced cytokine expression; the function seems to require its sumoylation and prevents N-CoR nuclear receptor corepressor clearance from target genes such as IL1B and NOS2. Involved in the TLR9-mediated protective mechanism in intestinal inflammation. Plays an anti-inflammatory role in liver inflammation; proposed to inhibit pro-inflammatory (but not antiapoptotic) NF-kappa-B signaling. This Rattus norvegicus (Rat) protein is Bile acid receptor (Nr1h4).